Here is a 143-residue protein sequence, read N- to C-terminus: Rheacalcin-2 (143 aa).

3 disulfide bridges follow: Cys-6-Cys-17, Cys-34-Cys-139, and Cys-114-Cys-131. Residues 13–140 (FDGRCFGFFP…CSDRKPFICE (128 aa)) enclose the C-type lectin domain. 2 positions are modified to phosphoserine: Ser-66 and Ser-68.

It is found in the secreted. The protein localises to the extracellular space. It localises to the extracellular matrix. In Rhea americana (Greater rhea), this protein is Rheacalcin-2.